The sequence spans 262 residues: Urease accessory protein UreD (262 aa).

Belongs to the UreD family. UreD, UreF and UreG form a complex that acts as a GTP-hydrolysis-dependent molecular chaperone, activating the urease apoprotein by helping to assemble the nickel containing metallocenter of UreC. The UreE protein probably delivers the nickel.

Its subcellular location is the cytoplasm. In terms of biological role, required for maturation of urease via the functional incorporation of the urease nickel metallocenter. The protein is Urease accessory protein UreD of Acetivibrio thermocellus (strain ATCC 27405 / DSM 1237 / JCM 9322 / NBRC 103400 / NCIMB 10682 / NRRL B-4536 / VPI 7372) (Clostridium thermocellum).